A 273-amino-acid polypeptide reads, in one-letter code: Putative phosphoenolpyruvate synthase regulatory protein (273 aa).

Residue G153 to T160 coordinates ADP.

The protein belongs to the pyruvate, phosphate/water dikinase regulatory protein family. PSRP subfamily.

It carries out the reaction [pyruvate, water dikinase] + ADP = [pyruvate, water dikinase]-phosphate + AMP + H(+). The catalysed reaction is [pyruvate, water dikinase]-phosphate + phosphate + H(+) = [pyruvate, water dikinase] + diphosphate. Bifunctional serine/threonine kinase and phosphorylase involved in the regulation of the phosphoenolpyruvate synthase (PEPS) by catalyzing its phosphorylation/dephosphorylation. In Yersinia pseudotuberculosis serotype I (strain IP32953), this protein is Putative phosphoenolpyruvate synthase regulatory protein.